A 159-amino-acid polypeptide reads, in one-letter code: Ecotin (159 aa).

The N-terminal stretch at 1–22 is a signal peptide; the sequence is MRPTPMTAILALSLAAAAPAMA. Residues Cys-68 and Cys-105 are joined by a disulfide bond.

It belongs to the protease inhibitor I11 (ecotin) family. Homodimer.

It is found in the periplasm. Functionally, general inhibitor of family S1 serine proteases. This is Ecotin from Pseudomonas putida (strain ATCC 700007 / DSM 6899 / JCM 31910 / BCRC 17059 / LMG 24140 / F1).